The primary structure comprises 126 residues: Large ribosomal subunit protein bL17 (126 aa).

It belongs to the bacterial ribosomal protein bL17 family. As to quaternary structure, part of the 50S ribosomal subunit. Contacts protein L32.

In Magnetococcus marinus (strain ATCC BAA-1437 / JCM 17883 / MC-1), this protein is Large ribosomal subunit protein bL17.